We begin with the raw amino-acid sequence, 101 residues long: NADH-quinone oxidoreductase subunit K (101 aa).

The next 3 helical transmembrane spans lie at leucine 4–leucine 24, isoleucine 30–phenylalanine 50, and isoleucine 61–leucine 81.

Belongs to the complex I subunit 4L family. In terms of assembly, NDH-1 is composed of 14 different subunits. Subunits NuoA, H, J, K, L, M, N constitute the membrane sector of the complex.

It is found in the cell inner membrane. It catalyses the reaction a quinone + NADH + 5 H(+)(in) = a quinol + NAD(+) + 4 H(+)(out). NDH-1 shuttles electrons from NADH, via FMN and iron-sulfur (Fe-S) centers, to quinones in the respiratory chain. The immediate electron acceptor for the enzyme in this species is believed to be ubiquinone. Couples the redox reaction to proton translocation (for every two electrons transferred, four hydrogen ions are translocated across the cytoplasmic membrane), and thus conserves the redox energy in a proton gradient. The chain is NADH-quinone oxidoreductase subunit K from Paraburkholderia phymatum (strain DSM 17167 / CIP 108236 / LMG 21445 / STM815) (Burkholderia phymatum).